Reading from the N-terminus, the 297-residue chain is Trimeric intracellular cation channel type A (297 aa).

Topologically, residues 1-18 (MDLISSLSLGELALSFSR) are lumenal. The chain crosses the membrane as a helical span at residues 19–39 (VPLFPVFDLSYFIVSIIYLKY). The Cytoplasmic segment spans residues 40 to 51 (EPGSVELSRRHP). The chain crosses the membrane as a helical span at residues 52–72 (VASWLCAMLHCFGSYILADLL). At 73 to 85 (LGEPIIDYFSNSS) the chain is on the lumenal side. Position 74 (glycine 74) interacts with Ca(2+). Residues 86–106 (SILLASGVWYLIFFCPLDLFY) form a helical membrane-spanning segment. Over 107-143 (KCVCFLPVKLIFVAMKEVVRVRKIAVGIHHAHHYHHG) the chain is Cytoplasmic. The a 1,2-diacyl-sn-glycero-3-phospho-(1D-myo-inositol-4,5-bisphosphate) site is built by lysine 122 and arginine 126. The chain crosses the membrane as a helical span at residues 144–164 (WFIMIATGWVKGSGVALLSNL). Topologically, residues 165–177 (EQLLRGVWKPETN) are lumenal. A helical membrane pass occupies residues 178-198 (EILHMSFPTKASLYGAILFTL). Topologically, residues 199 to 208 (QQTRWLPVSK) are cytoplasmic. The chain crosses the membrane as a helical span at residues 209-229 (ASLIFVFTMFMVSCKVFLTAT). The Lumenal segment spans residues 230-233 (HSHS). The chain crosses the membrane as a helical span at residues 234 to 254 (SPFDVLEGYICPVLFGATWGG). Residues 255 to 297 (DHHHDNHGAPHGMGLGTQHSGLPAKAKEELSEGFRKKKTKKAD) lie on the Cytoplasmic side of the membrane. The segment at 259 to 297 (DNHGAPHGMGLGTQHSGLPAKAKEELSEGFRKKKTKKAD) is disordered. Over residues 279-288 (KAKEELSEGF) the composition is skewed to basic and acidic residues.

It belongs to the TMEM38 family. As to quaternary structure, homotrimer; conformation seems to be controled by binding to diacylglycerol (DAG).

The protein localises to the sarcoplasmic reticulum membrane. The protein resides in the nucleus membrane. It catalyses the reaction K(+)(in) = K(+)(out). With respect to regulation, channel activity is activated by a change of voltage within the sarcoplasmic reticulum lumen and blocked by luminal high Ca(2+) levels. Its function is as follows. Intracellular monovalent cation channel required for maintenance of rapid intracellular calcium release. Acts as a potassium counter-ion channel that functions in synchronization with calcium release from intracellular stores. Opened by a change of voltage within the sarcoplasmic reticulum lumen. The sequence is that of Trimeric intracellular cation channel type A from Rattus norvegicus (Rat).